We begin with the raw amino-acid sequence, 353 residues long: 4-hydroxy-3-methylbut-2-en-1-yl diphosphate synthase (flavodoxin) (353 aa).

[4Fe-4S] cluster is bound by residues Cys263, Cys266, Cys298, and Glu305.

It belongs to the IspG family. [4Fe-4S] cluster serves as cofactor.

The enzyme catalyses (2E)-4-hydroxy-3-methylbut-2-enyl diphosphate + oxidized [flavodoxin] + H2O + 2 H(+) = 2-C-methyl-D-erythritol 2,4-cyclic diphosphate + reduced [flavodoxin]. It functions in the pathway isoprenoid biosynthesis; isopentenyl diphosphate biosynthesis via DXP pathway; isopentenyl diphosphate from 1-deoxy-D-xylulose 5-phosphate: step 5/6. Converts 2C-methyl-D-erythritol 2,4-cyclodiphosphate (ME-2,4cPP) into 1-hydroxy-2-methyl-2-(E)-butenyl 4-diphosphate. This Geobacter sulfurreducens (strain ATCC 51573 / DSM 12127 / PCA) protein is 4-hydroxy-3-methylbut-2-en-1-yl diphosphate synthase (flavodoxin).